Consider the following 132-residue polypeptide: DNA-directed RNA polymerase subunit Rpo8 (132 aa).

It belongs to the archaeal Rpo8 RNA polymerase subunit family. Part of the 13-subunit RNA polymerase complex.

The protein localises to the cytoplasm. The catalysed reaction is RNA(n) + a ribonucleoside 5'-triphosphate = RNA(n+1) + diphosphate. Functionally, DNA-dependent RNA polymerase (RNAP) catalyzes the transcription of DNA into RNA using the four ribonucleoside triphosphates as substrates. In Saccharolobus solfataricus (strain ATCC 35092 / DSM 1617 / JCM 11322 / P2) (Sulfolobus solfataricus), this protein is DNA-directed RNA polymerase subunit Rpo8.